The sequence spans 254 residues: MADIYFVGLGLSKRFLTNASLEVLKGSDVIYADIYTSISCDINEKTLREITGKEIIPATREVLETKEKEIYKLLDSGKNVAIAVVGDPMIATTHVSLATGARARGHRVSVIPGVSVHCYMISRSMLSSYKFGKSVTVTFPVLDKLDYTPYRVIKTNRELGLHTMVYLDLKETGIMTADLALNYLKKMESDIGDKVILDDDLVVIGERLGCADERVRAMKVVDALNQKFGAPPHIIIVPSRNLYEMEVEGLKCLS.

S-adenosyl-L-methionine contacts are provided by residues leucine 11, aspartate 87, isoleucine 90, 115-116, leucine 167, leucine 208, and histidine 233; that span reads SV.

It belongs to the diphthine synthase family. In terms of assembly, homodimer.

The enzyme catalyses 2-[(3S)-amino-3-carboxypropyl]-L-histidyl-[translation elongation factor 2] + 3 S-adenosyl-L-methionine = diphthine-[translation elongation factor 2] + 3 S-adenosyl-L-homocysteine + 3 H(+). It participates in protein modification; peptidyl-diphthamide biosynthesis. S-adenosyl-L-methionine-dependent methyltransferase that catalyzes the trimethylation of the amino group of the modified target histidine residue in translation elongation factor 2 (EF-2), to form an intermediate called diphthine. The three successive methylation reactions represent the second step of diphthamide biosynthesis. The protein is Diphthine synthase of Metallosphaera sedula (strain ATCC 51363 / DSM 5348 / JCM 9185 / NBRC 15509 / TH2).